A 204-amino-acid chain; its full sequence is Octanoyltransferase (204 aa).

One can recognise a BPL/LPL catalytic domain in the interval 27–202 (QGGEEALLLL…RFQPFLHLHL (176 aa)). Residues 65–72 (RGGDVTYH), 132–134 (SIG), and 145–147 (GFA) contribute to the substrate site. Cysteine 163 (acyl-thioester intermediate) is an active-site residue.

Belongs to the LipB family.

The protein resides in the cytoplasm. It carries out the reaction octanoyl-[ACP] + L-lysyl-[protein] = N(6)-octanoyl-L-lysyl-[protein] + holo-[ACP] + H(+). The protein operates within protein modification; protein lipoylation via endogenous pathway; protein N(6)-(lipoyl)lysine from octanoyl-[acyl-carrier-protein]: step 1/2. Functionally, catalyzes the transfer of endogenously produced octanoic acid from octanoyl-acyl-carrier-protein onto the lipoyl domains of lipoate-dependent enzymes. Lipoyl-ACP can also act as a substrate although octanoyl-ACP is likely to be the physiological substrate. The polypeptide is Octanoyltransferase (Geobacter sp. (strain M21)).